We begin with the raw amino-acid sequence, 299 residues long: tRNA dimethylallyltransferase (299 aa).

Position 13-20 (13-20 (GPTASGKT)) interacts with ATP. 15–20 (TASGKT) serves as a coordination point for substrate. The interaction with substrate tRNA stretch occupies residues 38-41 (DSRQ).

Belongs to the IPP transferase family. As to quaternary structure, monomer. It depends on Mg(2+) as a cofactor.

It carries out the reaction adenosine(37) in tRNA + dimethylallyl diphosphate = N(6)-dimethylallyladenosine(37) in tRNA + diphosphate. Functionally, catalyzes the transfer of a dimethylallyl group onto the adenine at position 37 in tRNAs that read codons beginning with uridine, leading to the formation of N6-(dimethylallyl)adenosine (i(6)A). In Parasynechococcus marenigrum (strain WH8102), this protein is tRNA dimethylallyltransferase.